A 259-amino-acid polypeptide reads, in one-letter code: Heat-labile enterotoxin IIA, A chain (259 aa).

The N-terminal stretch at 1-18 is a signal peptide; it reads MIKHVLLFFVFISFSVSA. NAD(+) is bound at residue 23 to 37; sequence RADSRTPDEIRRAGG. Glu-128 is a catalytic residue. Residues Cys-203 and Cys-215 are joined by a disulfide bond.

This sequence belongs to the enterotoxin A family. In terms of assembly, heterohexamer of one A chain and of five B chains.

In terms of biological role, the biological activity of the toxin is produced by the A chain, which activates intracellular adenyl cyclase. The sequence is that of Heat-labile enterotoxin IIA, A chain from Escherichia coli.